Reading from the N-terminus, the 365-residue chain is Chorismate synthase (365 aa).

Arginine 47 contributes to the NADP(+) binding site. FMN contacts are provided by residues 124-126 (RAS), glycine 287, 302-306 (KPTAT), and arginine 328.

Belongs to the chorismate synthase family. Homotetramer. It depends on FMNH2 as a cofactor.

The enzyme catalyses 5-O-(1-carboxyvinyl)-3-phosphoshikimate = chorismate + phosphate. The protein operates within metabolic intermediate biosynthesis; chorismate biosynthesis; chorismate from D-erythrose 4-phosphate and phosphoenolpyruvate: step 7/7. Functionally, catalyzes the anti-1,4-elimination of the C-3 phosphate and the C-6 proR hydrogen from 5-enolpyruvylshikimate-3-phosphate (EPSP) to yield chorismate, which is the branch point compound that serves as the starting substrate for the three terminal pathways of aromatic amino acid biosynthesis. This reaction introduces a second double bond into the aromatic ring system. In Prochlorococcus marinus (strain AS9601), this protein is Chorismate synthase.